Here is a 103-residue protein sequence, read N- to C-terminus: Small ubiquitin-related modifier 3 (103 aa).

Glycyl lysine isopeptide (Lys-Gly) (interchain with G-Cter in SUMO2) cross-links involve residues Lys5 and Lys7. Lys11 participates in a covalent cross-link: Glycyl lysine isopeptide (Lys-Gly) (interchain with G-Cter in SUMO); alternate. Lys11 is covalently cross-linked (Glycyl lysine isopeptide (Lys-Gly) (interchain with G-Cter in SUMO2); alternate). Positions 15-92 (DHINLKVAGQ…IDVFQQQTGG (78 aa)) constitute a Ubiquitin-like domain. Residue Gly92 forms a Glycyl lysine isopeptide (Gly-Lys) (interchain with K-? in acceptor proteins) linkage. Residues 93–103 (VPESSLAGHSF) constitute a propeptide that is removed on maturation.

This sequence belongs to the ubiquitin family. SUMO subfamily. As to quaternary structure, covalently attached to a number of proteins. Interacts with BMAL1. Interacts with USP25 (via ts SIM domain); the interaction sumoylates USP25 and inhibits its ubiquitin hydrolyzing activity. Interacts with SAE2 and UBE2I. Post-translationally, polymeric chains can be formed through Lys-11 cross-linking. In terms of processing, cleavage of precursor form by SENP1, SENP2 or SENP5 is necessary for function. As to expression, expressed predominantly in liver.

It is found in the cytoplasm. Its subcellular location is the nucleus. It localises to the PML body. In terms of biological role, ubiquitin-like protein which can be covalently attached to target lysines either as a monomer or as a lysine-linked polymer. Does not seem to be involved in protein degradation and may function as an antagonist of ubiquitin in the degradation process. Plays a role in a number of cellular processes such as nuclear transport, DNA replication and repair, mitosis and signal transduction. Covalent attachment to its substrates requires prior activation by the E1 complex SAE1-SAE2 and linkage to the E2 enzyme UBE2I, and can be promoted by an E3 ligase such as PIAS1-4, RANBP2 or CBX4. Plays a role in the regulation of sumoylation status of SETX. The sequence is that of Small ubiquitin-related modifier 3 from Homo sapiens (Human).